Here is a 94-residue protein sequence, read N- to C-terminus: Trp operon repressor homolog (94 aa).

The DNA-binding element occupies 58–81 (QREIAEKYGVSIAQITRGSNALKG).

Belongs to the TrpR family. Homodimer.

Its subcellular location is the cytoplasm. Functionally, this protein is an aporepressor. When complexed with L-tryptophan it binds the operator region of the trp operon and prevents the initiation of transcription. This Chlamydia trachomatis serovar L2 (strain ATCC VR-902B / DSM 19102 / 434/Bu) protein is Trp operon repressor homolog.